The sequence spans 158 residues: MGEIGFTEKQEALVKESWEILKQDIPKYSLHFFSQILEIAPAAKGLFSFLRDSDEVPHNNPKLKAHAVKVFKMTCETAIQLREEGKVVVADTTLQYLGSIHLKSGVIDPHFEVVKEALLRTLKEGLGEKYNEEVEGAWSQAYDHLALAIKTEMKQEES.

The Globin domain occupies glycine 5 to lysine 154. The Homodimerization signature appears at glutamate 38 to alanine 42. 4 residues coordinate heme b: serine 48, lysine 62, histidine 66, and histidine 101. The short motif at aspartate 108–arginine 120 is the Homodimerization element.

This sequence belongs to the plant globin family. In terms of assembly, unable to dimerize. Heme b is required as a cofactor. In terms of tissue distribution, expressed in rosette leaves but not in roots.

It localises to the cytoplasm. The protein localises to the nucleus. The catalysed reaction is Fe(III)-heme b-[protein] + nitric oxide + H2O = Fe(II)-heme b-[protein] + nitrite + 2 H(+). Phytoglobin that reduces nitrite to nitric oxide (NO) under anoxic conditions (e.g. during flooding or in waterlogged soil). May not function as an oxygen storage or transport protein. Has an unusually high affinity for O(2) through an hexacoordinate heme iron because of a very low dissociation constant. The sequence is that of Anaerobic nitrite reductase AHB2 from Arabidopsis thaliana (Mouse-ear cress).